The following is a 436-amino-acid chain: GTPase Der (436 aa).

EngA-type G domains lie at 4-167 (PVVA…KNIP) and 176-351 (VQFC…ENHS). Residues 10–17 (GRPNVGKS), 57–61 (DTGGI), 119–122 (NKVD), 182–189 (GRPNVGKS), 229–233 (DTAGM), and 294–297 (NKWD) contribute to the GTP site. Positions 352-436 (MRVQTNILND…PIRIFARARK (85 aa)) constitute a KH-like domain.

This sequence belongs to the TRAFAC class TrmE-Era-EngA-EngB-Septin-like GTPase superfamily. EngA (Der) GTPase family. In terms of assembly, associates with the 50S ribosomal subunit.

GTPase that plays an essential role in the late steps of ribosome biogenesis. The chain is GTPase Der from Bacillus licheniformis (strain ATCC 14580 / DSM 13 / JCM 2505 / CCUG 7422 / NBRC 12200 / NCIMB 9375 / NCTC 10341 / NRRL NRS-1264 / Gibson 46).